The chain runs to 638 residues: Adhesion G-protein coupled receptor F2 (638 aa).

Positions 1-25 are cleaved as a signal peptide; that stretch reads MISARWLYCLVLLLATESCRLFCQA. Residues 26–386 lie on the Extracellular side of the membrane; sequence ASKSKENVMP…ESPVLTYITY (361 aa). N-linked (GlcNAc...) asparagine glycans are attached at residues Asn155, Asn219, Asn248, Asn293, and Asn311. The GAIN-B domain maps to 233 to 377; that stretch reads PRNSLGKNFT…SILMSPNTVE (145 aa). Disulfide bonds link Cys329–Cys356 and Cys344–Cys358. The GPS stretch occupies residues 329-377; it reads CVGWHSLESRWDRRACKMIQENSRQAICRCQPNKFFTSFSILMSPNTVE. The chain crosses the membrane as a helical span at residues 387-407; it reads IGLGISICSLIICLAIEALVW. The Cytoplasmic segment spans residues 408–422; the sequence is SQVTKTEISYLRHLC. The chain crosses the membrane as a helical span at residues 423-443; sequence IANIAVTLLMADVWFIVASFL. Residues 444–465 lie on the Extracellular side of the membrane; it reads SGPIVHHNGCVTATFFVHFFYL. Residues 466–486 traverse the membrane as a helical segment; the sequence is SVFFWMLAKALLILYGILIVF. At 487 to 493 the chain is on the cytoplasmic side; sequence HTLPKSC. Residues 494–514 traverse the membrane as a helical segment; sequence LVASLFTVGYGCPLVIAVITL. Residues 515-541 are Extracellular-facing; sequence AVTEPGKGYLRPEACWLNWDMTKALLA. Residues 542–562 traverse the membrane as a helical segment; sequence FVVPALAIVVVNLITVTLVII. The Cytoplasmic portion of the chain corresponds to 563-586; that stretch reads KTQRAAVGSSMFQEVRAIVRICKN. Residues 587–607 traverse the membrane as a helical segment; sequence IAILTPLLGLTWGFGIATVVA. Topologically, residues 608–610 are extracellular; the sequence is GHS. A helical membrane pass occupies residues 611–631; the sequence is LAFHIIFSLLNALQVSPDAMI. Residues 632–638 lie on the Cytoplasmic side of the membrane; that stretch reads ESEWRGC.

This sequence belongs to the G-protein coupled receptor 2 family. Adhesion G-protein coupled receptor (ADGR) subfamily.

The protein localises to the membrane. Its function is as follows. Orphan receptor. The chain is Adhesion G-protein coupled receptor F2 (Adgrf2) from Rattus norvegicus (Rat).